The primary structure comprises 362 residues: RING finger protein 32 (362 aa).

The RING-type 1; atypical zinc finger occupies 127–169 (CPICKEEFELRPQVLLSCSHVFHRACLQAFEKFTNKKTCPLCR). Residues 186 to 215 (RIKCVTRIQAYWRGYVVRKWYRNLRETVPP) form the IQ domain. The segment at 293–352 (CSICLAPLSPAGGQRVGAGQRSRETALLSCSHVFHHACLLALEEFSVGDRPPFHACPLCR) adopts an RING-type 2; atypical zinc-finger fold.

It is found in the cytoplasm. In terms of biological role, may play a role in sperm formation. The protein is RING finger protein 32 (RNF32) of Macaca fascicularis (Crab-eating macaque).